The sequence spans 246 residues: MPTKVVKHFLNQGLLRTKIDEWLAQNFYEAGYSRVKVVQTSLGTNITIWAERPALIIGRRGATIRRLQEVFQTVFGLPNPRIRVEQPENPMLDARVQAFRIARSIERGIHFRRVAFAAINRIMSNGALGVEITISGKLTSERARFEKFKAGKVYKSGHKVDELVDRASAYARLPKGVIGVDVIIVKPGKPGDHVRIKSEEEVKDVVDAIRSEIESLGLQEETASTLREHMEAARPGEEHEEDREES.

In terms of domain architecture, KH type-2 spans 19–98 (IDEWLAQNFY…NPMLDARVQA (80 aa)). The segment at 218-246 (LQEETASTLREHMEAARPGEEHEEDREES) is disordered. Over residues 226–237 (LREHMEAARPGE) the composition is skewed to basic and acidic residues.

It belongs to the universal ribosomal protein uS3 family. Part of the 30S ribosomal subunit.

Binds the lower part of the 30S subunit head. This is Small ribosomal subunit protein uS3 from Aeropyrum pernix (strain ATCC 700893 / DSM 11879 / JCM 9820 / NBRC 100138 / K1).